Here is a 27-residue protein sequence, read N- to C-terminus: Cupiennin-3b (27 aa).

Glu-27 carries the glutamic acid 1-amide modification.

In terms of tissue distribution, expressed by the venom gland.

The protein localises to the secreted. This Cupiennius salei (American wandering spider) protein is Cupiennin-3b.